The following is a 167-amino-acid chain: Small heat shock protein C1 (167 aa).

Positions 59–167 constitute a sHSP domain; that stretch reads PFYESNSIKS…EQDAKEIPIN (109 aa).

It belongs to the small heat shock protein (HSP20) family.

The sequence is that of Small heat shock protein C1 (hspC1) from Rickettsia bellii (strain RML369-C).